The sequence spans 549 residues: Oxygen-dependent choline dehydrogenase (549 aa).

4–33 (DFVIIGSGSAGSALAYRLSEDGKNSVLVIE) contacts FAD. The active-site Proton acceptor is histidine 465.

It belongs to the GMC oxidoreductase family. The cofactor is FAD.

The enzyme catalyses choline + A = betaine aldehyde + AH2. It carries out the reaction betaine aldehyde + NAD(+) + H2O = glycine betaine + NADH + 2 H(+). The protein operates within amine and polyamine biosynthesis; betaine biosynthesis via choline pathway; betaine aldehyde from choline (cytochrome c reductase route): step 1/1. Functionally, involved in the biosynthesis of the osmoprotectant glycine betaine. Catalyzes the oxidation of choline to betaine aldehyde and betaine aldehyde to glycine betaine at the same rate. The protein is Oxygen-dependent choline dehydrogenase of Rhizobium etli (strain CIAT 652).